A 240-amino-acid chain; its full sequence is 1-(5-phosphoribosyl)-5-[(5-phosphoribosylamino)methylideneamino] imidazole-4-carboxamide isomerase 2 (240 aa).

Residue Asp8 is the Proton acceptor of the active site. Asp129 serves as the catalytic Proton donor.

Belongs to the HisA/HisF family.

The protein resides in the cytoplasm. It carries out the reaction 1-(5-phospho-beta-D-ribosyl)-5-[(5-phospho-beta-D-ribosylamino)methylideneamino]imidazole-4-carboxamide = 5-[(5-phospho-1-deoxy-D-ribulos-1-ylimino)methylamino]-1-(5-phospho-beta-D-ribosyl)imidazole-4-carboxamide. The protein operates within amino-acid biosynthesis; L-histidine biosynthesis; L-histidine from 5-phospho-alpha-D-ribose 1-diphosphate: step 4/9. The polypeptide is 1-(5-phosphoribosyl)-5-[(5-phosphoribosylamino)methylideneamino] imidazole-4-carboxamide isomerase 2 (Ruegeria sp. (strain TM1040) (Silicibacter sp.)).